The chain runs to 396 residues: Elongation factor Tu 2 (396 aa).

Positions 10–206 constitute a tr-type G domain; that stretch reads KPHVNVGTIG…TLDTYIPEPE (197 aa). The G1 stretch occupies residues 19-26; it reads GHVDHGKT. A GTP-binding site is contributed by 19–26; the sequence is GHVDHGKT. Threonine 26 is a Mg(2+) binding site. The interval 60–64 is G2; the sequence is GITIN. The segment at 81-84 is G3; it reads DCPG. Residues 81-85 and 136-139 each bind GTP; these read DCPGH and NKCD. The tract at residues 136 to 139 is G4; that stretch reads NKCD. Residues 174–176 are G5; it reads SAL.

This sequence belongs to the TRAFAC class translation factor GTPase superfamily. Classic translation factor GTPase family. EF-Tu/EF-1A subfamily. Monomer.

It is found in the cytoplasm. The enzyme catalyses GTP + H2O = GDP + phosphate + H(+). In terms of biological role, GTP hydrolase that promotes the GTP-dependent binding of aminoacyl-tRNA to the A-site of ribosomes during protein biosynthesis. This Psychrobacter sp. (strain PRwf-1) protein is Elongation factor Tu 2.